A 222-amino-acid polypeptide reads, in one-letter code: RING finger protein 141 (222 aa).

An RING-type zinc finger spans residues 147 to 184; the sequence is CCICMDGKADLILPCAHSFCQKCIDKWSGQSRNCPVCR.

The protein is RING finger protein 141 (rnf141) of Danio rerio (Zebrafish).